Consider the following 851-residue polypeptide: Internalin J (851 aa).

Residues 1 to 25 form the signal peptide; that stretch reads MKTTKIVIASLVSLTMVSNPLLTFA. LRR repeat units lie at residues 94 to 115, 116 to 136, 137 to 157, 158 to 179, 180 to 200, 201 to 221, 222 to 243, 244 to 263, 264 to 284, 285 to 306, 316 to 325, 338 to 357, 359 to 368, and 380 to 402; these read TLTSLDCHNSSITDMTGIEKLT, GLTKLICTSNNITTLDLSQNT, NLTYLACDSNKLTNLDVTPLT, KLTYLNCDTNKLTKLDVSQNPL, LTYLNCARNTLTEIDVSHNTQ, LTELDCHLNKKITKLDVTPQT, QLTTLDCSFNKITELDVSQNKL, LNRLNCDTNNITKLDLNQNI, QLTFLDCSSNKLTEIDVTPLT, QLTYFDCSVNPLTELDVSTLSK, DLLEIDLTHN, KIKELDVTHNTQLYLLDCQA, GITELDLSQN, and ELTELDVSHNTKLKSLSCVNAHI. MucBP domains lie at 506–568, 576–638, 647–709, and 717–779; these read PIKG…SQSV, IVAA…AQTV, APEK…SQTV, and IEAA…AQTV. Positions 786 to 825 are disordered; it reads NTNTDQPLPTKKPTNTTPTKPSNLKTTEVKKASDTLPKTG. The span at 792-811 shows a compositional bias: low complexity; that stretch reads PLPTKKPTNTTPTKPSNLKT. The LPXTG sorting signal signature appears at 821–825; sequence LPKTG. Pentaglycyl murein peptidoglycan amidated threonine is present on Thr824. Residues 825–851 constitute a propeptide, removed by sortase A; the sequence is GDSAPWKSALLGVFLSSTALVIWKKKK.

Belongs to the internalin family. As to quaternary structure, nearly full-length mature protein and an internal LRR-containing fragment interact in vitro with human intestinal mucin-2 (MUC2) but not with mucin-1. LRR fragment binding is slightly better at pH 5.5, (the pH of the intestine) than at pH 7.4.

Its subcellular location is the secreted. The protein resides in the cell wall. Despite being transcribed during bacterial growth in culture the protein is only detected in infected mice. Involved in several steps of L.monocytogenes infection by both intravenous and oral infection. Probably acts as an adhesion; upon ectopic expression in L.innocula bacteria adhere better to human cell lines. This is Internalin J (inlJ) from Listeria monocytogenes serovar 1/2a (strain ATCC BAA-679 / EGD-e).